The primary structure comprises 1033 residues: Calcium-transporting ATPase 3, plasma membrane-type (1033 aa).

Residues 1–180 lie on the Cytoplasmic side of the membrane; it reads MHSGVNGCCP…FVWEALEDTT (180 aa). Transmembrane regions (helical) follow at residues 181–201 and 204–224; these read LIILSACAIFSLVVGITTEGW and GAHDGVGIVASILLVVSVTGT. The Cytoplasmic portion of the chain corresponds to 225-268; it reads SNYQQSLQFRDLDKEKRKILVQVTRNGLRQRVLIDDLLPGDAVH. Transmembrane regions (helical) follow at residues 269-289 and 362-382; these read LAVGDQVPADGLFISGFSVLV and IGKIGLFFAVLTFIVLSQGII. Residues 383 to 405 are Cytoplasmic-facing; that stretch reads GQKYLDGLLLSWSGDDVLEILDH. A helical transmembrane segment spans residues 406-426; sequence FAVAVTIVVVAVPEGLPLAVT. Asp461 acts as the 4-aspartylphosphate intermediate in catalysis. Asp762 and Asp766 together coordinate Mg(2+). Residues 823 to 843 traverse the membrane as a helical segment; that stretch reads FQLTVNVVALLVNFTSACFTG. Residues 844–846 lie on the Cytoplasmic side of the membrane; it reads DAP. A run of 2 helical transmembrane segments spans residues 847 to 867 and 928 to 948; these read LTAVQLLWVNMIMDTLGALAL and IVLNTIIFNTFVFCQVFNEIS. The Cytoplasmic segment spans residues 949-965; sequence SREMEDINVLRGMAGNS. A run of 2 helical transmembrane segments spans residues 966 to 986 and 999 to 1019; these read IFLGVLTGTIFFQFILVQFLG and WLISILFGFLGMPIAAAIKLI. The Cytoplasmic segment spans residues 1020–1033; sequence AVEPHEKADTRRTP.

It belongs to the cation transport ATPase (P-type) (TC 3.A.3) family. Type IIB subfamily.

It is found in the membrane. It carries out the reaction Ca(2+)(in) + ATP + H2O = Ca(2+)(out) + ADP + phosphate + H(+). Activated by calmodulin. Functionally, this magnesium-dependent enzyme catalyzes the hydrolysis of ATP coupled with the translocation of calcium from the cytosol out of the cell, into the endoplasmic reticulum, or into organelles. This chain is Calcium-transporting ATPase 3, plasma membrane-type, found in Oryza sativa subsp. japonica (Rice).